Reading from the N-terminus, the 1756-residue chain is RANBP2-like and GRIP domain-containing protein 2 (1756 aa).

Phosphoserine is present on Ser21. 3 TPR repeats span residues 59–92 (PRAH…NPPQ), 583–616 (QKMG…LKII), and 647–680 (EDAH…VSYW). The tract at residues 759–804 (GPLYKNGSLRNADSEIKHSTPSPTKYSLSPSKSYKYSPKTPPRWAE) is disordered. The span at 777-796 (STPSPTKYSLSPSKSYKYSP) shows a compositional bias: low complexity. The region spanning 1029–1165 (HFEPVVQMPE…FEECQRLLLD (137 aa)) is the RanBD1 1 domain. 2 disordered regions span residues 1206–1241 (TKVT…TLEW) and 1299–1324 (AKLN…ERDG). Positions 1228 to 1237 (IKPNPENTGP) are enriched in polar residues. Over residues 1310-1322 (TDEESDVTQEEER) the composition is skewed to acidic residues. A RanBD1 2 domain is found at 1326 to 1462 (YFEPVVPLPD…FDEAKTAQEK (137 aa)). Polar residues predominate over residues 1573-1586 (NDSETSSVAQSGSE). Residues 1573–1614 (NDSETSSVAQSGSESKVEPKKCELSKNSDIEQSSDSKVKNLS) form a disordered region. The segment covering 1587-1610 (SKVEPKKCELSKNSDIEQSSDSKV) has biased composition (basic and acidic residues). Residues 1693 to 1743 (QEESAANVEHLKNVLLQFIFLKPGSERESLLPVINTMLQLSPEEKGKLAAV) form the GRIP domain.

The sequence is that of RANBP2-like and GRIP domain-containing protein 2 (RGPD2) from Homo sapiens (Human).